The primary structure comprises 252 residues: Triosephosphate isomerase (252 aa).

Residue 10-12 (NWK) participates in substrate binding. His-96 serves as the catalytic Electrophile. Residue Glu-168 is the Proton acceptor of the active site. Substrate is bound by residues Gly-174, Ser-214, and 235-236 (GG).

The protein belongs to the triosephosphate isomerase family. Homodimer.

It is found in the cytoplasm. The enzyme catalyses D-glyceraldehyde 3-phosphate = dihydroxyacetone phosphate. The protein operates within carbohydrate biosynthesis; gluconeogenesis. It participates in carbohydrate degradation; glycolysis; D-glyceraldehyde 3-phosphate from glycerone phosphate: step 1/1. Functionally, involved in the gluconeogenesis. Catalyzes stereospecifically the conversion of dihydroxyacetone phosphate (DHAP) to D-glyceraldehyde-3-phosphate (G3P). The polypeptide is Triosephosphate isomerase (Lactobacillus helveticus (strain DPC 4571)).